The chain runs to 474 residues: Putative pectinesterase/pectinesterase inhibitor 38 (474 aa).

The pectinesterase inhibitor 38 stretch occupies residues methionine 1 to valine 130. N-linked (GlcNAc...) asparagine glycosylation is present at asparagine 80. The interval aspartate 164–serine 461 is pectinesterase 38. The substrate site is built by threonine 241 and glutamine 271. The active-site Proton donor; for pectinesterase activity is aspartate 294. Cysteines 308 and 328 form a disulfide. Aspartate 315 (nucleophile; for pectinesterase activity) is an active-site residue. Residue asparagine 351 is glycosylated (N-linked (GlcNAc...) asparagine). Positions 380 and 382 each coordinate substrate. N-linked (GlcNAc...) asparagine glycosylation occurs at asparagine 409.

It in the N-terminal section; belongs to the PMEI family. In the C-terminal section; belongs to the pectinesterase family.

The protein localises to the secreted. It is found in the cell wall. The enzyme catalyses [(1-&gt;4)-alpha-D-galacturonosyl methyl ester](n) + n H2O = [(1-&gt;4)-alpha-D-galacturonosyl](n) + n methanol + n H(+). It functions in the pathway glycan metabolism; pectin degradation; 2-dehydro-3-deoxy-D-gluconate from pectin: step 1/5. Acts in the modification of cell walls via demethylesterification of cell wall pectin. The chain is Putative pectinesterase/pectinesterase inhibitor 38 (PME38) from Arabidopsis thaliana (Mouse-ear cress).